The chain runs to 118 residues: Small ribosomal subunit protein uS13 (118 aa).

Residues 93-118 (RNLPVRGQRSKTNARTRKGPRKPIKR) form a disordered region.

Belongs to the universal ribosomal protein uS13 family. In terms of assembly, part of the 30S ribosomal subunit. Forms a loose heterodimer with protein S19. Forms two bridges to the 50S subunit in the 70S ribosome.

Its function is as follows. Located at the top of the head of the 30S subunit, it contacts several helices of the 16S rRNA. In the 70S ribosome it contacts the 23S rRNA (bridge B1a) and protein L5 of the 50S subunit (bridge B1b), connecting the 2 subunits; these bridges are implicated in subunit movement. Contacts the tRNAs in the A and P-sites. This Saccharophagus degradans (strain 2-40 / ATCC 43961 / DSM 17024) protein is Small ribosomal subunit protein uS13.